The primary structure comprises 255 residues: Spectinomycin 9-adenylyltransferase (255 aa).

The enzyme catalyses spectinomycin + ATP = 9-O-adenylylspectinomycin + diphosphate. Its function is as follows. Mediates bacterial resistance to the antibiotic spectinomycin but not streptomycin. The protein is Spectinomycin 9-adenylyltransferase of Enterococcus faecalis (Streptococcus faecalis).